A 653-amino-acid polypeptide reads, in one-letter code: Macrolide export ATP-binding/permease protein MacB (653 aa).

Residues Leu-6–Pro-244 form the ABC transporter domain. Gly-42–Ser-49 provides a ligand contact to ATP. Transmembrane regions (helical) follow at residues Phe-277–Gly-297, Leu-526–Met-546, Leu-587–Leu-607, and Phe-617–Pro-637.

Belongs to the ABC transporter superfamily. Macrolide exporter (TC 3.A.1.122) family. As to quaternary structure, homodimer.

Its subcellular location is the cell inner membrane. In terms of biological role, non-canonical ABC transporter that contains transmembrane domains (TMD), which form a pore in the inner membrane, and an ATP-binding domain (NBD), which is responsible for energy generation. Confers resistance against macrolides. The polypeptide is Macrolide export ATP-binding/permease protein MacB (Bradyrhizobium diazoefficiens (strain JCM 10833 / BCRC 13528 / IAM 13628 / NBRC 14792 / USDA 110)).